The following is a 109-amino-acid chain: NADH dehydrogenase [ubiquinone] flavoprotein 3, mitochondrial (109 aa).

The transit peptide at 1–34 directs the protein to the mitochondrion; that stretch reads MAASLLLRQGRAGALKTVLLEAGVFRGVAPAVSL. The disordered stretch occupies residues 33-72; that stretch reads SLSAESGKNEKGLPPNPKKQSPPKKPVSAAPTEPFDNTTY. Phosphoserine is present on Ser-106.

This sequence belongs to the complex I NDUFV3 subunit family. Complex I is composed of 45 different subunits. This is a component of the flavoprotein-sulfur (FP) fragment of the enzyme.

The protein localises to the mitochondrion inner membrane. Its function is as follows. Accessory subunit of the mitochondrial membrane respiratory chain NADH dehydrogenase (Complex I), that is believed not to be involved in catalysis. Complex I functions in the transfer of electrons from NADH to the respiratory chain. The immediate electron acceptor for the enzyme is believed to be ubiquinone. May be the terminally assembled subunit of Complex I. This is NADH dehydrogenase [ubiquinone] flavoprotein 3, mitochondrial (NDUFV3) from Bos taurus (Bovine).